Consider the following 442-residue polypeptide: Tryptophan synthase beta chain 2 (442 aa).

An N6-(pyridoxal phosphate)lysine modification is found at K122.

It belongs to the TrpB family. In terms of assembly, tetramer of two alpha and two beta chains. The cofactor is pyridoxal 5'-phosphate.

It carries out the reaction (1S,2R)-1-C-(indol-3-yl)glycerol 3-phosphate + L-serine = D-glyceraldehyde 3-phosphate + L-tryptophan + H2O. It functions in the pathway amino-acid biosynthesis; L-tryptophan biosynthesis; L-tryptophan from chorismate: step 5/5. The beta subunit is responsible for the synthesis of L-tryptophan from indole and L-serine. This Methanosarcina acetivorans (strain ATCC 35395 / DSM 2834 / JCM 12185 / C2A) protein is Tryptophan synthase beta chain 2 (trpB2).